The following is a 95-amino-acid chain: uncharacterized protein (95 aa).

An N-terminal signal peptide occupies residues 1 to 21; sequence MKKITLFFTALLCLFSTSVLA.

This is an uncharacterized protein from Haemophilus influenzae (strain ATCC 51907 / DSM 11121 / KW20 / Rd).